We begin with the raw amino-acid sequence, 436 residues long: Glutamyl-tRNA reductase (436 aa).

Substrate-binding positions include 49 to 52 (TCNR), Ser-109, 114 to 116 (EGQ), and Gln-120. The active-site Nucleophile is the Cys-50. 198–203 (GAGRMS) contributes to the NADP(+) binding site.

This sequence belongs to the glutamyl-tRNA reductase family. As to quaternary structure, homodimer.

It catalyses the reaction (S)-4-amino-5-oxopentanoate + tRNA(Glu) + NADP(+) = L-glutamyl-tRNA(Glu) + NADPH + H(+). It functions in the pathway porphyrin-containing compound metabolism; protoporphyrin-IX biosynthesis; 5-aminolevulinate from L-glutamyl-tRNA(Glu): step 1/2. It participates in porphyrin-containing compound metabolism; chlorophyll biosynthesis. Functionally, catalyzes the NADPH-dependent reduction of glutamyl-tRNA(Glu) to glutamate 1-semialdehyde (GSA). The protein is Glutamyl-tRNA reductase of Prochlorococcus marinus (strain AS9601).